The primary structure comprises 242 residues: MGQKIHPTGFRLGITQEHRSRWYADPKNYPDTLQEDHKIRQYVKATLANAGISQIRVERKAEQIDLEVRTARPGVVVGRGGAGIDSLRVGLQKLLGSNRQIRINVVEVTKVDTDAMLIGEYIAQQLEKRVSFRRVVRQAITRAQKAGVEGIKIQVSGRVNGAEIARTEVTREGSVPLHTLRANIDYAYCTAKTIYGILGIKIWVFKGEIIPGQEEIANAKVNQPKRRQQKRRQQYDDRSNEG.

Residues 39–109 (IRQYVKATLA…QIRINVVEVT (71 aa)) enclose the KH type-2 domain. Residues 220–242 (KVNQPKRRQQKRRQQYDDRSNEG) form a disordered region. Over residues 223 to 232 (QPKRRQQKRR) the composition is skewed to basic residues. Basic and acidic residues predominate over residues 233–242 (QQYDDRSNEG).

Belongs to the universal ribosomal protein uS3 family. As to quaternary structure, part of the 30S ribosomal subunit. Forms a tight complex with proteins S10 and S14.

Binds the lower part of the 30S subunit head. Binds mRNA in the 70S ribosome, positioning it for translation. This Trichodesmium erythraeum (strain IMS101) protein is Small ribosomal subunit protein uS3.